We begin with the raw amino-acid sequence, 298 residues long: Protease HtpX homolog (298 aa).

2 consecutive transmembrane segments (helical) span residues 5-25 (IFLFILTNILVLTTIGIVLSV) and 45-65 (MALLVFSLVVGFVGSFTSLAI). H155 contacts Zn(2+). The active site involves E156. Zn(2+) is bound at residue H159. Helical transmembrane passes span 170–190 (LLQGIVNTFVVFLSRIAAWIA) and 204–224 (FIAMIIFQIVFSILGSLVVFA). A Zn(2+)-binding site is contributed by E230.

It belongs to the peptidase M48B family. It depends on Zn(2+) as a cofactor.

The protein resides in the cell membrane. This is Protease HtpX homolog from Bacillus subtilis (strain 168).